A 308-amino-acid chain; its full sequence is ADP-L-glycero-D-manno-heptose-6-epimerase (308 aa).

NADP(+) is bound by residues 10–11, 31–32, lysine 38, lysine 53, 75–79, and asparagine 92; these read MI, DN, and EGACS. Tyrosine 140 serves as the catalytic Proton acceptor. Lysine 144 serves as a coordination point for NADP(+). Residue asparagine 169 participates in substrate binding. Residues valine 170 and lysine 178 each coordinate NADP(+). Lysine 178 acts as the Proton acceptor in catalysis. Substrate contacts are provided by residues serine 180, histidine 187, 201 to 204, arginine 209, and tyrosine 272; that span reads FEGS.

It belongs to the NAD(P)-dependent epimerase/dehydratase family. HldD subfamily. Homopentamer. It depends on NADP(+) as a cofactor.

The catalysed reaction is ADP-D-glycero-beta-D-manno-heptose = ADP-L-glycero-beta-D-manno-heptose. It functions in the pathway nucleotide-sugar biosynthesis; ADP-L-glycero-beta-D-manno-heptose biosynthesis; ADP-L-glycero-beta-D-manno-heptose from D-glycero-beta-D-manno-heptose 7-phosphate: step 4/4. Functionally, catalyzes the interconversion between ADP-D-glycero-beta-D-manno-heptose and ADP-L-glycero-beta-D-manno-heptose via an epimerization at carbon 6 of the heptose. The chain is ADP-L-glycero-D-manno-heptose-6-epimerase from Actinobacillus pleuropneumoniae serotype 5b (strain L20).